Here is a 154-residue protein sequence, read N- to C-terminus: MSHYEGDLRPAGARFVIVCSRWNARITDALVAGACHSLVDNGVPDDAVDVVRVPGAWEIPIVANLLAQAGQHAAIIALGCVVRGDTRHYEHVADLCAEGMMSVQMQTGVPVLNGVLAVECIKDAEMRAGGSHGNKGAETALAALEMVSLLEKLP.

5-amino-6-(D-ribitylamino)uracil-binding positions include Trp-22, 56–58 (AWE), and 80–82 (CVV). A (2S)-2-hydroxy-3-oxobutyl phosphate-binding site is contributed by 85 to 86 (DT). The active-site Proton donor is His-88. 5-amino-6-(D-ribitylamino)uracil is bound at residue Asn-113. (2S)-2-hydroxy-3-oxobutyl phosphate is bound at residue Arg-127.

This sequence belongs to the DMRL synthase family. In terms of assembly, forms an icosahedral capsid composed of 60 subunits, arranged as a dodecamer of pentamers.

The enzyme catalyses (2S)-2-hydroxy-3-oxobutyl phosphate + 5-amino-6-(D-ribitylamino)uracil = 6,7-dimethyl-8-(1-D-ribityl)lumazine + phosphate + 2 H2O + H(+). It functions in the pathway cofactor biosynthesis; riboflavin biosynthesis; riboflavin from 2-hydroxy-3-oxobutyl phosphate and 5-amino-6-(D-ribitylamino)uracil: step 1/2. Its function is as follows. Catalyzes the formation of 6,7-dimethyl-8-ribityllumazine by condensation of 5-amino-6-(D-ribitylamino)uracil with 3,4-dihydroxy-2-butanone 4-phosphate. This is the penultimate step in the biosynthesis of riboflavin. The chain is 6,7-dimethyl-8-ribityllumazine synthase from Xylella fastidiosa (strain M23).